The following is a 287-amino-acid chain: MNSKKHLGHTARKRFGQNFLHDTSVIQGIVAAIYPQPNQFLVEIGPGLGALTEPVGELVDHLTVVELDRDLAERLRHHPFLHQKLTVIETDAMQFDFGALYTKENLAEKGQKLRVFGNLPYNISTPLMFHLFKYHDVIQDMHFMLQKEVVKRLCAAPNSKAYGRLTIMAQYFCQVMPVLEVPPSAFKPAPKVDSAVVRLIPHKELPHPVKDLYWLNRVCSQAFNQRRKTLRNALSTLFSPENLTALGIDLNARAENLAIADYARLANWLADNPPADINKDEILDSEE.

Residues Asn18, Leu20, Gly45, Glu66, Asp91, and Asn118 each contribute to the S-adenosyl-L-methionine site.

Belongs to the class I-like SAM-binding methyltransferase superfamily. rRNA adenine N(6)-methyltransferase family. RsmA subfamily.

It localises to the cytoplasm. It carries out the reaction adenosine(1518)/adenosine(1519) in 16S rRNA + 4 S-adenosyl-L-methionine = N(6)-dimethyladenosine(1518)/N(6)-dimethyladenosine(1519) in 16S rRNA + 4 S-adenosyl-L-homocysteine + 4 H(+). Its function is as follows. Specifically dimethylates two adjacent adenosines (A1518 and A1519) in the loop of a conserved hairpin near the 3'-end of 16S rRNA in the 30S particle. May play a critical role in biogenesis of 30S subunits. The sequence is that of Ribosomal RNA small subunit methyltransferase A from Haemophilus influenzae (strain PittEE).